Here is a 232-residue protein sequence, read N- to C-terminus: Myb-related protein 308 (232 aa).

2 consecutive HTH myb-type domains span residues 9 to 61 and 62 to 116; these read KAHT…INYL and RPDL…RRKL. 2 consecutive DNA-binding regions (H-T-H motif) follow at residues 37 to 61 and 89 to 112; these read WRSLPKAAGLLRCGKSCRLRWINYL and WSLIAGRLPGRTDNEIKNYWNTHI.

As to expression, expressed in roots, stems, leaves, seed pods and flowers.

It localises to the nucleus. Functionally, transcription factor. This is Myb-related protein 308 from Antirrhinum majus (Garden snapdragon).